Consider the following 516-residue polypeptide: GMP synthase [glutamine-hydrolyzing] (516 aa).

In terms of domain architecture, Glutamine amidotransferase type-1 spans 8 to 198 (KILILDFGSQ…ALNICKCDAL (191 aa)). C84 functions as the Nucleophile in the catalytic mechanism. Residues H172 and E174 contribute to the active site. A GMPS ATP-PPase domain is found at 199–391 (WNIENIIEND…LGLPYNMLYR (193 aa)). Position 226 to 232 (226 to 232 (SGGVDSS)) interacts with ATP.

As to quaternary structure, homodimer.

It catalyses the reaction XMP + L-glutamine + ATP + H2O = GMP + L-glutamate + AMP + diphosphate + 2 H(+). Its pathway is purine metabolism; GMP biosynthesis; GMP from XMP (L-Gln route): step 1/1. Its function is as follows. Catalyzes the synthesis of GMP from XMP. This is GMP synthase [glutamine-hydrolyzing] from Francisella philomiragia subsp. philomiragia (strain ATCC 25017 / CCUG 19701 / FSC 153 / O#319-036).